The following is a 239-amino-acid chain: Flagellin B3 (239 aa).

Residues 1–11 (MLKNFMKNKKG) constitute a propeptide that is removed on maturation. N115 and N128 each carry an N-linked (GlcNAc...) asparagine glycan.

It belongs to the archaeal flagellin family. In terms of processing, N-linked glycans consist of the 779 Da trisaccharide beta-ManNAc(Thr)-(1-4)-beta-GlcNAc3NAcA-(1-3)-beta-GlcNAc.

The protein resides in the archaeal flagellum. Flagellin is the subunit protein which polymerizes to form the filaments of archaeal flagella. This chain is Flagellin B3 (flaB3), found in Methanococcus voltae.